A 564-amino-acid chain; its full sequence is Phosphomethylpyrimidine synthase (564 aa).

Substrate-binding positions include asparagine 203, methionine 232, tyrosine 261, histidine 297, 317 to 319 (SRG), 358 to 361 (DGLR), and glutamate 397. Zn(2+) is bound at residue histidine 401. Position 424 (tyrosine 424) interacts with substrate. Histidine 465 provides a ligand contact to Zn(2+). Positions 541, 544, and 549 each coordinate [4Fe-4S] cluster.

It belongs to the ThiC family. It depends on [4Fe-4S] cluster as a cofactor.

It carries out the reaction 5-amino-1-(5-phospho-beta-D-ribosyl)imidazole + S-adenosyl-L-methionine = 4-amino-2-methyl-5-(phosphooxymethyl)pyrimidine + CO + 5'-deoxyadenosine + formate + L-methionine + 3 H(+). It functions in the pathway cofactor biosynthesis; thiamine diphosphate biosynthesis. In terms of biological role, catalyzes the synthesis of the hydroxymethylpyrimidine phosphate (HMP-P) moiety of thiamine from aminoimidazole ribotide (AIR) in a radical S-adenosyl-L-methionine (SAM)-dependent reaction. This Bacteroides fragilis (strain ATCC 25285 / DSM 2151 / CCUG 4856 / JCM 11019 / LMG 10263 / NCTC 9343 / Onslow / VPI 2553 / EN-2) protein is Phosphomethylpyrimidine synthase.